A 340-amino-acid chain; its full sequence is Anthocyanidin reductase (340 aa).

2 residues coordinate NADP(+): lysine 49 and tyrosine 169.

Belongs to the NAD(P)-dependent epimerase/dehydratase family. Dihydroflavonol-4-reductase subfamily. In terms of assembly, homo- or heterodimer. In terms of tissue distribution, flowers and young siliques. Detected specifically in the endothelium of seed coat.

The enzyme catalyses a (2R,3R)-flavan-3-ol + 2 NAD(+) = an anthocyanidin with a 3-hydroxy group + 2 NADH + 2 H(+). The catalysed reaction is a (2R,3R)-flavan-3-ol + 2 NADP(+) = an anthocyanidin with a 3-hydroxy group + 2 NADPH + 2 H(+). Its pathway is secondary metabolite biosynthesis; flavonoid biosynthesis. Inhibited by (+)-catechin, quercetin and (+)- and (-)-dihydroquercetin. Not inhibited by salt. Positive cooperativity with NADPH acting as cosubstrate and modulator. Its function is as follows. Involved in the biosynthesis of condensed tannins. Converts cyanidin into (-)-epicatechin as the major product. The chain is Anthocyanidin reductase (BAN) from Arabidopsis thaliana (Mouse-ear cress).